Reading from the N-terminus, the 73-residue chain is Potassium channel toxin alpha-KTx 27.1 (73 aa).

The signal sequence occupies residues 1-23; it reads MKFLFLTLFVCCFIAVLVIPSEA.

It belongs to the short scorpion toxin superfamily. Potassium channel inhibitor family. Alpha-KTx 27 subfamily. In terms of processing, contains 4 disulfide bonds. In terms of tissue distribution, expressed by the venom gland.

The protein localises to the secreted. The polypeptide is Potassium channel toxin alpha-KTx 27.1 (Buthus israelis (Israeli scorpion)).